The sequence spans 348 residues: Rhodopsin (348 aa).

Residues 1 to 33 (TEGPYFYIPMVNTTGIVRSPYEYPQYYLVNPAA) lie on the Extracellular side of the membrane. N-linked (GlcNAc...) asparagine glycosylation is present at asparagine 12. The chain crosses the membrane as a helical span at residues 34-58 (YAMLGAYMFFLIIVGFPVNFMTLYV). The Cytoplasmic segment spans residues 59–70 (TLEHKKLRTPLN). A helical membrane pass occupies residues 71–93 (YILLNLAVADLFMVIGGFTTTIY). At 94–107 (TSMHGYFVLGRLGC) the chain is on the extracellular side. The cysteines at positions 107 and 184 are disulfide-linked. Residues 108 to 130 (NIEGFFATLGGMISLWSLAVLAI) traverse the membrane as a helical segment. Residues 131-133 (ERW) carry the 'Ionic lock' involved in activated form stabilization motif. At 131-149 (ERWVVVCKPISNFRFGENH) the chain is on the cytoplasmic side. A helical membrane pass occupies residues 150 to 170 (AIMGVSLTWAMALACTVPPLV). Residues 171–199 (GWSRYIPEGMQCSCGIDYYTRAEGFNNES) are Extracellular-facing. An N-linked (GlcNAc...) asparagine glycan is attached at asparagine 197. The chain crosses the membrane as a helical span at residues 200–221 (FVLYMFFCHFTIPLTIIFFCYG). Over 222–249 (RLLCAVKEAAAAQQESETTQRAEREVTR) the chain is Cytoplasmic. Residues 250–271 (MVIIMVIGFLICWLPYASVAWF) form a helical membrane-spanning segment. Over 272-283 (IFTHQGSEFGPL) the chain is Extracellular. The chain crosses the membrane as a helical span at residues 284–305 (FMTIPAFFAKSSSIYNPMIYIC). At lysine 293 the chain carries N6-(retinylidene)lysine. Topologically, residues 306–348 (MNKQFRHCMITTLFCGKNPFEGEEEGASSTKTEASSASSVSPA) are cytoplasmic. Cysteine 320 carries the S-palmitoyl cysteine lipid modification. Positions 327–348 (GEEEGASSTKTEASSASSVSPA) are disordered. Residues 332–348 (ASSTKTEASSASSVSPA) are compositionally biased toward low complexity.

It belongs to the G-protein coupled receptor 1 family. Opsin subfamily. In terms of processing, phosphorylated on some or all of the serine and threonine residues present in the C-terminal region. Contains one covalently linked retinal chromophore.

The protein localises to the membrane. It localises to the cell projection. The protein resides in the cilium. Its subcellular location is the photoreceptor outer segment. Photoreceptor required for image-forming vision at low light intensity. While most salt water fish species use retinal as chromophore, most freshwater fish use 3-dehydroretinal, or a mixture of retinal and 3-dehydroretinal. Light-induced isomerization of 11-cis to all-trans retinal triggers a conformational change that activates signaling via G-proteins. Subsequent receptor phosphorylation mediates displacement of the bound G-protein alpha subunit by arrestin and terminates signaling. The sequence is that of Rhodopsin (rho) from Sargocentron microstoma (Smallmouth squirrelfish).